The sequence spans 569 residues: MALLAAATLNPTTHLSLRSRAGRNSENLWLRSTASSQKSKGRFCNLTIRAGTPSKPAEPIGPVFTKLKPWQIPKRDWFDKDFLFGASTSAYQIEGAWNEDGKGPSTWDHFCHTYPERISDMTNGDVAANSYHLYEEDVKALKDMGMKVYRFSISWSRILPDGTGKVNQAGIDYYNKLINSLIDNDIVPYVTIWHWDTPQALEDKYGGFLNRQIVDDYKQFAEVCFKNFGDRVKNWFTFNEPHTYCCFSYGEGIHAPGRCSPGMDCAVPEGDSLREPYTAGHHILLAHAEAVQLFKARYNMHGDSKIGMAFDVMGYEPYQDSFLDDQARERSIDYNMGWFLEPVVRGDYPFSMRSLIGDRLPMFTKEEQEKLASSCDIMGLNYYTSRFSKHVDMSPDFTPTLNTDDAYASSETTGSDGNDIGPITGTYWIYMYPKGLTDLLLIMKEKYGNPPVFITENGIADVEGDESMPDPLDDWKRLDYLQRHISAVKDAIDQGADVRGHFTWGLIDNFEWSLGYSSRFGLVYIDKNDGNKRKLKKSAKWFSKFNSVPKPLLKTTNNNATMTAASVSV.

The N-terminal 50 residues, 1–50, are a transit peptide targeting the chloroplast; that stretch reads MALLAAATLNPTTHLSLRSRAGRNSENLWLRSTASSQKSKGRFCNLTIRA. Residues glutamine 92, histidine 194, and 239–240 contribute to the a beta-D-glucoside site; that span reads NE. Glutamate 240 serves as the catalytic Proton donor. A disulfide bridge connects residues cysteine 259 and cysteine 265. A beta-D-glucoside-binding positions include tyrosine 383, glutamate 456, tryptophan 504, 511–512, and phenylalanine 520; that span reads EW. Residue glutamate 456 is the Nucleophile of the active site.

This sequence belongs to the glycosyl hydrolase 1 family. As to quaternary structure, homo- and heterohexamers. In terms of tissue distribution, expressed in young seedlings early after germination.

The protein resides in the plastid. Its subcellular location is the chloroplast. It carries out the reaction Hydrolysis of terminal, non-reducing beta-D-glucosyl residues with release of beta-D-glucose.. The enzyme catalyses DIMBOA beta-D-glucoside + H2O = DIMBOA + D-glucose. It catalyses the reaction DIBOA beta-D-glucoside + H2O = DIBOA + D-glucose. In terms of biological role, acts in defense of young plant parts against pests via the production of hydroxamic acids from hydroxamic acid glucosides. Enzymatic activity is highly correlated with plant growth. The preferred substrate is DIMBOA-beta-D-glucoside. This Triticum aestivum (Wheat) protein is 4-hydroxy-7-methoxy-3-oxo-3,4-dihydro-2H-1,4-benzoxazin-2-yl glucoside beta-D-glucosidase 1b, chloroplastic (GLU1B).